The primary structure comprises 153 residues: Ubiquitin/ISG15-conjugating enzyme E2 L6 (153 aa).

The UBC core domain maps to 2–149 (MASMRVVKEL…AEEFTLRFGV (148 aa)). Cys-86 functions as the Glycyl thioester intermediate in the catalytic mechanism.

It belongs to the ubiquitin-conjugating enzyme family. As to quaternary structure, interacts with RNF19A, RNF19B and RNF144B. Interacts with FLT3 (tyrosine phosphorylated). ISGylated. Present in natural killer cells (at protein level).

The enzyme catalyses S-ubiquitinyl-[E1 ubiquitin-activating enzyme]-L-cysteine + [E2 ubiquitin-conjugating enzyme]-L-cysteine = [E1 ubiquitin-activating enzyme]-L-cysteine + S-ubiquitinyl-[E2 ubiquitin-conjugating enzyme]-L-cysteine.. The protein operates within protein modification; protein ubiquitination. Catalyzes the covalent attachment of ubiquitin or ISG15 to other proteins. Functions in the E6/E6-AP-induced ubiquitination of p53/TP53. Promotes ubiquitination and subsequent proteasomal degradation of FLT3. The polypeptide is Ubiquitin/ISG15-conjugating enzyme E2 L6 (UBE2L6) (Homo sapiens (Human)).